The following is a 397-amino-acid chain: Serpin B10 (397 aa).

The Nuclear localization signal signature appears at 74-77 (KKRK).

The protein belongs to the serpin family. Ov-serpin subfamily.

It localises to the nucleus. The protein localises to the cytoplasm. Its function is as follows. Protease inhibitor that may play a role in the regulation of protease activities during hematopoiesis and apoptosis induced by TNF. May regulate protease activities in the cytoplasm and in the nucleus. The sequence is that of Serpin B10 (SERPINB10) from Sorex araneus (Eurasian common shrew).